A 194-amino-acid polypeptide reads, in one-letter code: Peptidyl-tRNA hydrolase (194 aa).

TRNA is bound at residue tyrosine 17. Catalysis depends on histidine 22, which acts as the Proton acceptor. Positions 68, 70, and 116 each coordinate tRNA.

Belongs to the PTH family. Monomer.

Its subcellular location is the cytoplasm. It carries out the reaction an N-acyl-L-alpha-aminoacyl-tRNA + H2O = an N-acyl-L-amino acid + a tRNA + H(+). Its function is as follows. Hydrolyzes ribosome-free peptidyl-tRNAs (with 1 or more amino acids incorporated), which drop off the ribosome during protein synthesis, or as a result of ribosome stalling. In terms of biological role, catalyzes the release of premature peptidyl moieties from peptidyl-tRNA molecules trapped in stalled 50S ribosomal subunits, and thus maintains levels of free tRNAs and 50S ribosomes. The sequence is that of Peptidyl-tRNA hydrolase from Shewanella sediminis (strain HAW-EB3).